A 389-amino-acid polypeptide reads, in one-letter code: Trans-2-enoyl-CoA reductase [NADH] (389 aa).

NAD(+)-binding positions include 47-52 (GASTGY), 73-74 (FE), 110-111 (DA), and 138-139 (LA). Residue Tyr-224 participates in substrate binding. Catalysis depends on Tyr-234, which acts as the Proton donor. Residues Lys-243 and 272–274 (LVT) contribute to the NAD(+) site.

Belongs to the TER reductase family. In terms of assembly, monomer.

It catalyses the reaction a 2,3-saturated acyl-CoA + NAD(+) = a (2E)-enoyl-CoA + NADH + H(+). The protein operates within lipid metabolism; fatty acid biosynthesis. Involved in the fatty acid synthesis (FAS II). Catalyzes the reduction of a carbon-carbon double bond in an enoyl moiety that is covalently linked to a coenzyme A (CoA). The protein is Trans-2-enoyl-CoA reductase [NADH] of Clostridium perfringens (strain 13 / Type A).